The sequence spans 504 residues: Endosomal/lysosomal proton channel TMEM175 (504 aa).

The interval 1-27 is disordered; it reads MSQPRTPEQALDTPGDCPPGRRDEDAG. The Cytoplasmic segment spans residues 1–33; it reads MSQPRTPEQALDTPGDCPPGRRDEDAGEGIQCS. Thr6 carries the post-translational modification Phosphothreonine. The helical transmembrane segment at 34–56 threads the bilayer; sequence QRMLSFSDALLSIIATVMILPVT. The RxxxFSD motif 1 signature appears at 35–41; it reads RMLSFSD. Topologically, residues 57 to 77 are lumenal; sequence HTEISPEQQFDRSVQRLLATR. Positions 58–63 are short helix H1-1; it reads TEISPE. The segment at 65 to 71 is short helix H2-1; that stretch reads QFDRSVQ. Residues 78 to 100 form a helical membrane-spanning segment; it reads IAVYLMTFLIVTVAWAAHTRLFQ. Topologically, residues 101 to 106 are cytoplasmic; sequence VVGKTD. The helical transmembrane segment at 107–128 threads the bilayer; sequence DTLALLNLACMMTITFLPYTFS. Residues 129–138 are Lumenal-facing; it reads LMVTFPDVPL. The helical transmembrane segment at 139–160 threads the bilayer; the sequence is GIFLFCVCVIAIGVVQALIVGY. Topologically, residues 161–184 are cytoplasmic; sequence AFHFPHLLSPQIQRSAHRALYRRH. A helical transmembrane segment spans residues 185–205; sequence VLGIVLQGPALCFAAAIFSLF. The Lumenal portion of the chain corresponds to 206 to 210; that stretch reads FVPLS. Residues 211-230 form a helical membrane-spanning segment; the sequence is YLLMVTVILLPYVSKVTGWC. The Cytoplasmic portion of the chain corresponds to 231 to 257; sequence RDRLLGHREPSAHPVEVFSFDLHEPLS. A helical membrane pass occupies residues 258–282; the sequence is KERVEAFSDGVYAIVATLLILDICE. A RxxxFSD motif 2 motif is present at residues 260–266; that stretch reads RVEAFSD. Residues 283-309 are Lumenal-facing; it reads DNVPDPKDVKERFSGSLVAALSATGPR. Positions 288-296 are short helix H1-2; sequence PKDVKERFS. Positions 298 to 304 are short helix H2-2; sequence SLVAALS. A helical transmembrane segment spans residues 310-332; sequence FLAYFGSFATVGLLWFAHHSLFL. At 333–338 the chain is on the cytoplasmic side; the sequence is HVRKAT. The chain crosses the membrane as a helical span at residues 339–360; sequence RAMGLLNTLSLAFVGGLPLAYQ. At 361–375 the chain is on the lumenal side; the sequence is QTSAFARQPRDELER. Residues 376 to 396 traverse the membrane as a helical segment; the sequence is VRVSCTIIFLASIFQLAMWTT. Residues 397-416 lie on the Cytoplasmic side of the membrane; it reads ALLHQAETLQPSVWFGGREH. Residues 417-440 traverse the membrane as a helical segment; the sequence is VLMFAKLALYPCASLLAFASTCLL. Topologically, residues 441–442 are lumenal; that stretch reads SR. Residues 443–469 traverse the membrane as a helical segment; that stretch reads FSVGIFHLMQIAVPCAFLLLRLLVGLA. The Cytoplasmic segment spans residues 470-504; the sequence is LATLRVLRGLARPEHPPPAPTGQDDPQSQLLPAPC. Residues 483–504 are disordered; that stretch reads EHPPPAPTGQDDPQSQLLPAPC. Positions 493–504 are enriched in polar residues; the sequence is DDPQSQLLPAPC.

The protein belongs to the TMEM175 family. In terms of assembly, homodimer. Interacts with AKT (AKT1, AKT2 or AKT3); leading to formation of the lysoK(GF) complex, which activates the channel. Interacts with LAMP1; inhibiting the proton channel activity of TMEM175. Interacts with LAMP2; inhibiting the proton channel activity of TMEM175. As to expression, widely expressed.

It localises to the endosome membrane. Its subcellular location is the lysosome membrane. The catalysed reaction is H(+)(in) = H(+)(out). It carries out the reaction K(+)(in) = K(+)(out). Active at low pH (under pH 4.6): proton channel activity is activated by luminal side protons. Polyunsaturated fatty acids, such as arachidonic acid, also activate the channel activity. Proton channel activity is directly inhibited by LAMP1 or LAMP2, facilitating lysosomal acidification. Channel activity is activated following interaction with AKT (AKT1, AKT2 or AKT3): interaction promotes activation from closed to an open state. Activation by AKT is independent of AKT serine/threonine-protein kinase activity. Its function is as follows. Proton-activated proton channel that catalyzes proton efflux from endosomes and lysosomes to maintain a steady-state pH. Activated at low pH (under pH 4.6) by luminal side protons: selectively mediates lysosomal proton release from lysosomes, eliciting a proton leak that balances V-ATPase activity to maintain pH homeostasis. Regulation of lumenal pH stability is required for autophagosome-lysosome fusion. Also acts as a potassium channel at higher pH, regulating potassium conductance in endosomes and lysosomes. Constitutes the pore-forming subunit of the lysoK(GF) complex, a complex activated by extracellular growth factors. The lysoK(GF) complex is composed of TMEM175 and AKT (AKT1, AKT2 or AKT3), a major target of growth factor receptors: in the complex, TMEM175 channel is opened by conformational changes by AKT, leading to its activation. The lysoK(GF) complex is required to protect neurons against stress-induced damage. The protein is Endosomal/lysosomal proton channel TMEM175 of Homo sapiens (Human).